The following is a 142-amino-acid chain: Transcriptional regulator MraZ (142 aa).

SpoVT-AbrB domains are found at residues 5–51 and 77–120; these read ASAL…PRPE and AADV…DAAT.

Belongs to the MraZ family. Forms oligomers.

It is found in the cytoplasm. The protein resides in the nucleoid. The chain is Transcriptional regulator MraZ from Cupriavidus pinatubonensis (strain JMP 134 / LMG 1197) (Cupriavidus necator (strain JMP 134)).